A 214-amino-acid chain; its full sequence is High frequency lysogenization protein HflD homolog (214 aa).

The protein belongs to the HflD family.

Its subcellular location is the cytoplasm. The protein resides in the cell inner membrane. The sequence is that of High frequency lysogenization protein HflD homolog from Chromohalobacter salexigens (strain ATCC BAA-138 / DSM 3043 / CIP 106854 / NCIMB 13768 / 1H11).